We begin with the raw amino-acid sequence, 102 residues long: Large ribosomal subunit protein bL21 (102 aa).

The protein belongs to the bacterial ribosomal protein bL21 family. Part of the 50S ribosomal subunit. Contacts protein L20.

This protein binds to 23S rRNA in the presence of protein L20. This Shouchella clausii (strain KSM-K16) (Alkalihalobacillus clausii) protein is Large ribosomal subunit protein bL21.